The primary structure comprises 79 residues: KSKWGKLWGKAKGVAKKGAKKVKKALLKALKKKLAKEMAKSKGVDYKEMKAKVMAMDKAKVLQEAMKILGKKAMDKYLS.

The protein belongs to the cationic peptide 06 (cytoinsectotoxin) family. As to expression, expressed by the venom gland.

The protein resides in the secreted. Its function is as follows. Insecticidal and antimicrobial peptide. Has insecticidal activity against larvae of flesh fly S.carnaria. Has antibacterial activity against Gram-positive bacterium B.subtilis B-501 (MIC=0.63 uM) and Gram-negative bacterium E.coli DH5alpha (MIC=2.5 uM). The sequence is that of Cytoinsectotoxin-3 from Lachesana tarabaevi (Spider).